The following is a 241-amino-acid chain: 3-oxoacyl-[acyl-carrier-protein] reductase FabG (241 aa).

Residues 13 to 16 (GASG), S38, 57 to 58 (EI), and N83 each bind NADP(+). S135 provides a ligand contact to substrate. Y148 serves as the catalytic Proton acceptor. NADP(+) is bound by residues 148 to 152 (YCASK) and I181.

This sequence belongs to the short-chain dehydrogenases/reductases (SDR) family. In terms of assembly, homotetramer.

It carries out the reaction a (3R)-hydroxyacyl-[ACP] + NADP(+) = a 3-oxoacyl-[ACP] + NADPH + H(+). It participates in lipid metabolism; fatty acid biosynthesis. Catalyzes the NADPH-dependent reduction of beta-ketoacyl-ACP substrates to beta-hydroxyacyl-ACP products, the first reductive step in the elongation cycle of fatty acid biosynthesis. The polypeptide is 3-oxoacyl-[acyl-carrier-protein] reductase FabG (fabG) (Rickettsia felis (strain ATCC VR-1525 / URRWXCal2) (Rickettsia azadi)).